Here is a 567-residue protein sequence, read N- to C-terminus: Phosphoglucomutase-like protein 5 (567 aa).

A disordered region spans residues 1 to 26; it reads MEGSPIPVLTVPTAPYEDQRPAGGGG. The residue at position 120 (threonine 120) is a Phosphothreonine. Residue serine 122 is modified to Phosphoserine.

It belongs to the phosphohexose mutase family. In terms of assembly, interacts with DMD/dystrophin; the interaction is direct. Interacts with UTRN/utrophin. As to expression, detected in smooth and cardiac muscle at high levels and in skeletal muscle at low level. Present in other tissues due to vascular or other smooth muscle component. Low levels are present in liver, kidney, skin and brain (at protein level).

The protein resides in the cell junction. It localises to the adherens junction. It is found in the cytoplasm. Its subcellular location is the cytoskeleton. The protein localises to the cell membrane. The protein resides in the sarcolemma. In terms of biological role, component of adherens-type cell-cell and cell-matrix junctions. Has no phosphoglucomutase activity in vitro. This is Phosphoglucomutase-like protein 5 from Homo sapiens (Human).